The primary structure comprises 298 residues: Ethanolamine ammonia-lyase small subunit (298 aa).

The adenosylcob(III)alamin site is built by V210, E231, and C261.

This sequence belongs to the EutC family. As to quaternary structure, the basic unit is a heterodimer which dimerizes to form tetramers. The heterotetramers trimerize; 6 large subunits form a core ring with 6 small subunits projecting outwards. Adenosylcob(III)alamin is required as a cofactor.

It is found in the bacterial microcompartment. The catalysed reaction is ethanolamine = acetaldehyde + NH4(+). The protein operates within amine and polyamine degradation; ethanolamine degradation. Its function is as follows. Catalyzes the deamination of various vicinal amino-alcohols to oxo compounds. Allows this organism to utilize ethanolamine as the sole source of nitrogen and carbon in the presence of external vitamin B12. In Salmonella dublin (strain CT_02021853), this protein is Ethanolamine ammonia-lyase small subunit.